Reading from the N-terminus, the 291-residue chain is MIQIFFLGTGAGSPSKKRKLPAFLVRREGLNILLDCGEGTQYTLMNNKLGINSIKIIGITHMHGDHVFGLLGVIASMGLLDRKETLYILGPRDLKDFLYTSFEYSKFNPSFKIEFIDNYNDQNITIATFKTCHTVESQGYLISERDRVKIDEEKLEKEKIKDWRVMRKLKEGKTVEYNGKFLKPEDYLVIKRGLKVAYTGDTIPCQSVIESVKGADLLIHDSTFLNEPSAFTYGHSNVADAAKVALEASVKLLALTHISPRYEDVTEHLKVARRIFPKSILPDDLSYITLK.

7 residues coordinate Zn(2+): His-61, His-63, Asp-65, His-66, His-133, Asp-201, and His-257. Asp-65 functions as the Proton acceptor in the catalytic mechanism.

The protein belongs to the RNase Z family. As to quaternary structure, homodimer. Requires Zn(2+) as cofactor.

The enzyme catalyses Endonucleolytic cleavage of RNA, removing extra 3' nucleotides from tRNA precursor, generating 3' termini of tRNAs. A 3'-hydroxy group is left at the tRNA terminus and a 5'-phosphoryl group is left at the trailer molecule.. Its function is as follows. Zinc phosphodiesterase, which displays some tRNA 3'-processing endonuclease activity. Probably involved in tRNA maturation, by removing a 3'-trailer from precursor tRNA. This is Ribonuclease Z from Saccharolobus islandicus (strain L.S.2.15 / Lassen #1) (Sulfolobus islandicus).